Consider the following 133-residue polypeptide: Putative pre-16S rRNA nuclease (133 aa).

Belongs to the YqgF nuclease family.

The protein localises to the cytoplasm. Could be a nuclease involved in processing of the 5'-end of pre-16S rRNA. This chain is Putative pre-16S rRNA nuclease, found in Dehalococcoides mccartyi (strain ATCC BAA-2266 / KCTC 15142 / 195) (Dehalococcoides ethenogenes (strain 195)).